We begin with the raw amino-acid sequence, 272 residues long: MNNRVHQGHFARKRFGQNFLNDQFVIDSIVSAIHPVPGEAVVEIGPGLGALTEPVAARMDHMTVIELDRDLAARLASHPQLKDKLTIHQQDAMKVNFSELSEQAGQPLRVFGNLPYNISTPLMFHLFSYTDAIRDMHFMLQKEVVNRLVAGPNSKTYGRLTVMAQYYCNVIPVLEVPPTAFTPAPKVDSAVVRLIPHVQMPHPVGDVRMLSRITTQAFNQRRKTVRNSLGDLFTSEQLIELGIDPILRAENISVAQYCKLANWLSAQSTPQK.

Asn-18, Leu-20, Gly-45, Glu-66, Asp-91, and Asn-113 together coordinate S-adenosyl-L-methionine.

Belongs to the class I-like SAM-binding methyltransferase superfamily. rRNA adenine N(6)-methyltransferase family. RsmA subfamily.

The protein localises to the cytoplasm. The enzyme catalyses adenosine(1518)/adenosine(1519) in 16S rRNA + 4 S-adenosyl-L-methionine = N(6)-dimethyladenosine(1518)/N(6)-dimethyladenosine(1519) in 16S rRNA + 4 S-adenosyl-L-homocysteine + 4 H(+). Specifically dimethylates two adjacent adenosines (A1518 and A1519) in the loop of a conserved hairpin near the 3'-end of 16S rRNA in the 30S particle. May play a critical role in biogenesis of 30S subunits. This Yersinia pestis bv. Antiqua (strain Antiqua) protein is Ribosomal RNA small subunit methyltransferase A.